Consider the following 276-residue polypeptide: Exosome complex component RRP43 (276 aa).

Alanine 2 is modified (N-acetylalanine).

It belongs to the RNase PH family. In terms of assembly, component of the RNA exosome core complex (Exo-9), composed of EXOSC1, EXOSC2, EXOSC3, EXOSC4, EXOSC5, EXOSC6, EXOSC7, EXOSC8 and EXOSC9; within the complex interacts with EXOSC5 and EXOSC6. The catalytically inactive RNA exosome core complex (Exo-9) associates with the catalytic subunit EXOSC10/RRP6. Exo-9 may associate with DIS3 to form the nucleolar exosome complex, or DIS3L to form the cytoplasmic exosome complex. Exo-9 is formed by a hexameric base ring consisting of the heterodimers EXOSC4-EXOSC9, EXOSC5-EXOSC8 and EXOSC6-EXOSC7, and a cap ring consisting of EXOSC1, EXOSC2 and EXOSC3. The RNA exosome complex associates with cofactors C1D/RRP47, MPHOSPH6/MPP6 and MTREX/MTR4.

Its subcellular location is the cytoplasm. The protein localises to the nucleus. It localises to the nucleolus. Non-catalytic component of the RNA exosome complex which has 3'-&gt;5' exoribonuclease activity and participates in a multitude of cellular RNA processing and degradation events. In the nucleus, the RNA exosome complex is involved in proper maturation of stable RNA species such as rRNA, snRNA and snoRNA, in the elimination of RNA processing by-products and non-coding 'pervasive' transcripts, such as antisense RNA species and promoter-upstream transcripts (PROMPTs), and of mRNAs with processing defects, thereby limiting or excluding their export to the cytoplasm. The RNA exosome may be involved in Ig class switch recombination (CSR) and/or Ig variable region somatic hypermutation (SHM) by targeting AICDA deamination activity to transcribed dsDNA substrates. In the cytoplasm, the RNA exosome complex is involved in general mRNA turnover and specifically degrades inherently unstable mRNAs containing AU-rich elements (AREs) within their 3' untranslated regions, and in RNA surveillance pathways, preventing translation of aberrant mRNAs. It seems to be involved in degradation of histone mRNA. The catalytic inactive RNA exosome core complex of 9 subunits (Exo-9) is proposed to play a pivotal role in the binding and presentation of RNA for ribonucleolysis, and to serve as a scaffold for the association with catalytic subunits and accessory proteins or complexes. EXOSC8 binds to ARE-containing RNAs. In Mus musculus (Mouse), this protein is Exosome complex component RRP43 (Exosc8).